Consider the following 144-residue polypeptide: Large ribosomal subunit protein uL15 (144 aa).

A disordered region spans residues 1-56; that stretch reads MELNTLAPAPGAKSSKKRVGRGIGSGLGKTGGRGHKGQKSRSGGSVKPGFEGGQMP. The span at 21–31 shows a compositional bias: gly residues; sequence RGIGSGLGKTG.

This sequence belongs to the universal ribosomal protein uL15 family. In terms of assembly, part of the 50S ribosomal subunit.

Its function is as follows. Binds to the 23S rRNA. The sequence is that of Large ribosomal subunit protein uL15 from Idiomarina loihiensis (strain ATCC BAA-735 / DSM 15497 / L2-TR).